Reading from the N-terminus, the 153-residue chain is 6,7-dimethyl-8-ribityllumazine synthase (153 aa).

5-amino-6-(D-ribitylamino)uracil contacts are provided by residues phenylalanine 22, 56-58, and 80-82; these read AFE and TVI. (2S)-2-hydroxy-3-oxobutyl phosphate is bound at residue 85–86; sequence ST. The Proton donor role is filled by histidine 88. Phenylalanine 113 lines the 5-amino-6-(D-ribitylamino)uracil pocket. Arginine 127 serves as a coordination point for (2S)-2-hydroxy-3-oxobutyl phosphate.

The protein belongs to the DMRL synthase family. Forms an icosahedral capsid composed of 60 subunits, arranged as a dodecamer of pentamers.

The enzyme catalyses (2S)-2-hydroxy-3-oxobutyl phosphate + 5-amino-6-(D-ribitylamino)uracil = 6,7-dimethyl-8-(1-D-ribityl)lumazine + phosphate + 2 H2O + H(+). The protein operates within cofactor biosynthesis; riboflavin biosynthesis; riboflavin from 2-hydroxy-3-oxobutyl phosphate and 5-amino-6-(D-ribitylamino)uracil: step 1/2. Functionally, catalyzes the formation of 6,7-dimethyl-8-ribityllumazine by condensation of 5-amino-6-(D-ribitylamino)uracil with 3,4-dihydroxy-2-butanone 4-phosphate. This is the penultimate step in the biosynthesis of riboflavin. The polypeptide is 6,7-dimethyl-8-ribityllumazine synthase (Glaesserella parasuis serovar 5 (strain SH0165) (Haemophilus parasuis)).